The chain runs to 808 residues: Phospholipase D alpha 1 (808 aa).

Residues 1–30 (MAQISLHGTLHVTIYEVDKLHSGGGPHFFR) constitute a propeptide that is removed on maturation. Residues 1 to 125 (MAQISLHGTL…LDGEEIDRWV (125 aa)) form the C2 domain. D186 is a binding site for Ca(2+). One can recognise a PLD phosphodiesterase 1 domain in the interval 326–364 (TMFTHHQKIVVVDSAMPNGDSQRRRIVSFVGGLDLCDGR). Catalysis depends on residues H331, K333, and D338. A 1,2-diacyl-sn-glycero-3-phosphate is bound at residue H331. Ca(2+) is bound by residues H370 and H404. A 1,2-diacyl-sn-glycero-3-phosphate contacts are provided by Q520 and H659. In terms of domain architecture, PLD phosphodiesterase 2 spans 654-681 (FMIYVHTKMMIVDDEYIIIGSANINQRS). Catalysis depends on residues H659, K661, and D666. E720 contributes to the Ca(2+) binding site.

The protein belongs to the phospholipase D family. C2-PLD subfamily. Requires Ca(2+) as cofactor. In terms of tissue distribution, expression is higher in radicle than in endosperm.

It localises to the cytoplasm. It is found in the membrane. The protein localises to the vacuole. Its subcellular location is the endoplasmic reticulum. The protein resides in the plastid. It localises to the cell membrane. The catalysed reaction is a 1,2-diacyl-sn-glycero-3-phosphocholine + H2O = a 1,2-diacyl-sn-glycero-3-phosphate + choline + H(+). Functionally, hydrolyzes glycerol-phospholipids at the terminal phosphodiesteric bond. Plays an important role in various cellular processes, including phytohormone action, vesicular trafficking, secretion, cytoskeletal arrangement, meiosis, tumor promotion, pathogenesis, membrane deterioration and senescence. This chain is Phospholipase D alpha 1 (PLD1), found in Ricinus communis (Castor bean).